A 406-amino-acid polypeptide reads, in one-letter code: ATP synthase subunit a (406 aa).

2 stretches are compositionally biased toward low complexity: residues 22–31 (AGEHGAPAPE) and 43–59 (DAAG…AEHG). Positions 22–76 (AGEHGAPAPEVATPAEGHGARDAAGAATDPHGAAAEHGAAAHEDPAQHGAAGAEA) are disordered. Transmembrane regions (helical) follow at residues 151 to 171 (KHVV…FAAV), 209 to 229 (FVPY…FGLV), 232 to 252 (AATA…TFLI), 278 to 298 (LWPL…TKPF), 304 to 324 (LFAN…LIFA), and 351 to 371 (VQAY…VAHH). A disordered region spans residues 375-406 (DEHEEHGHGAAATGGAHGSHGSHVAGASPGHG). The span at 383-406 (GAAATGGAHGSHGSHVAGASPGHG) shows a compositional bias: low complexity.

This sequence belongs to the ATPase A chain family. F-type ATPases have 2 components, CF(1) - the catalytic core - and CF(0) - the membrane proton channel. CF(1) has five subunits: alpha(3), beta(3), gamma(1), delta(1), epsilon(1). CF(0) has three main subunits: a(1), b(2) and c(9-12). The alpha and beta chains form an alternating ring which encloses part of the gamma chain. CF(1) is attached to CF(0) by a central stalk formed by the gamma and epsilon chains, while a peripheral stalk is formed by the delta and b chains.

It localises to the cell inner membrane. Key component of the proton channel; it plays a direct role in the translocation of protons across the membrane. The protein is ATP synthase subunit a of Anaeromyxobacter sp. (strain Fw109-5).